The primary structure comprises 122 residues: Large ribosomal subunit protein uL14 (122 aa).

Belongs to the universal ribosomal protein uL14 family. In terms of assembly, part of the 50S ribosomal subunit. Forms a cluster with proteins L3 and L19. In the 70S ribosome, L14 and L19 interact and together make contacts with the 16S rRNA in bridges B5 and B8.

In terms of biological role, binds to 23S rRNA. Forms part of two intersubunit bridges in the 70S ribosome. In Rhodopseudomonas palustris (strain HaA2), this protein is Large ribosomal subunit protein uL14.